We begin with the raw amino-acid sequence, 20 residues long: Cathepsin L-like cysteine proteinase (20 aa).

The protein belongs to the peptidase C1 family.

The protein localises to the lysosome. Thiol protease. This chain is Cathepsin L-like cysteine proteinase, found in Fasciola hepatica (Liver fluke).